The primary structure comprises 387 residues: F-box/LRR-repeat/kelch-repeat protein At2g29770 (387 aa).

A disordered region spans residues 1-34; the sequence is MVFISETSDDGSNGGDPTKNPQEEEEENLPPIPQ. The F-box domain maps to 31–78; sequence PIPQGIPDELIESTVLLIRRCHYPTLSLLSKTFRRVISSSELYKSRFI. The LRR 1 repeat unit spans residues 105-128; the sequence is CNIPRNISLHLREIKSLPPLNHGS. Kelch repeat units lie at residues 136–183 and 184–231; these read HMYV…VIDG and RIYV…FVTS. An LRR 2 repeat occupies 196–219; it reads DHWIEVFDIENRIWSSVPHHRYCN.

In Arabidopsis thaliana (Mouse-ear cress), this protein is F-box/LRR-repeat/kelch-repeat protein At2g29770.